Reading from the N-terminus, the 400-residue chain is Large envelope protein (400 aa).

Met-1 bears the N-acetylmethionine mark. Disordered stretches follow at residues Met-1 to Ala-55 and Leu-85 to Gln-118. The N-myristoyl glycine; by host moiety is linked to residue Gly-2. The segment at Gly-2 to Ala-119 is pre-S1. The pre-S stretch occupies residues Gly-2–Asn-174. At Gly-2–Gly-181 the chain is on the virion surface; in external conformation side. At Gly-2–Arg-253 the chain is on the intravirion; in internal conformation side. Trp-4 carries N-linked (GlcNAc...) asparagine glycosylation. A compositionally biased stretch (polar residues) spans Ser-96–Thr-106. Residues Met-120–Asn-174 form a pre-S2 region. Residues Phe-182–Ile-202 form a helical membrane-spanning segment. Residues Pro-203–Arg-253 lie on the Intravirion; in external conformation side of the membrane. Residues Phe-254 to Phe-274 form a helical membrane-spanning segment. Residues Gln-275–Ser-348 lie on the Virion surface side of the membrane. N-linked (GlcNAc...) asparagine; by host glycosylation occurs at Asn-320. The helical transmembrane segment at Leu-349–Ile-369 threads the bilayer. The Intravirion segment spans residues Trp-370–Trp-375. Residues Gly-376 to Val-398 traverse the membrane as a helical segment. Topologically, residues Tyr-399 to Ile-400 are virion surface.

This sequence belongs to the orthohepadnavirus major surface antigen family. As to quaternary structure, in its internal form (Li-HBsAg), interacts with the capsid protein and with the isoform S. Interacts with host chaperone CANX. In terms of assembly, associates with host chaperone CANX through its pre-S2 N glycan; this association may be essential for isoform M proper secretion. Interacts with isoform L. Interacts with the antigens of satellite virus HDV (HDVAgs); this interaction is required for encapsidation of HDV genomic RNA. Isoform M is N-terminally acetylated by host at a ratio of 90%, and N-glycosylated by host at the pre-S2 region. In terms of processing, myristoylated.

The protein localises to the virion membrane. Functionally, the large envelope protein exists in two topological conformations, one which is termed 'external' or Le-HBsAg and the other 'internal' or Li-HBsAg. In its external conformation the protein attaches the virus to cell receptors and thereby initiating infection. This interaction determines the species specificity and liver tropism. This attachment induces virion internalization predominantly through caveolin-mediated endocytosis. The large envelope protein also assures fusion between virion membrane and endosomal membrane. In its internal conformation the protein plays a role in virion morphogenesis and mediates the contact with the nucleocapsid like a matrix protein. Its function is as follows. The middle envelope protein plays an important role in the budding of the virion. It is involved in the induction of budding in a nucleocapsid independent way. In this process the majority of envelope proteins bud to form subviral lipoprotein particles of 22 nm of diameter that do not contain a nucleocapsid. The protein is Large envelope protein of Hepatitis B virus genotype C subtype ar (isolate Japan/S-207/1988) (HBV-C).